Here is a 602-residue protein sequence, read N- to C-terminus: GTP-binding protein 2 (602 aa).

Residues 16–64 (GGGPAVGGTLKARGAGSSSGCGGPKGKKKNGRNRGGKANNPPYLPPEAE) are disordered. The segment covering 40-50 (KGKKKNGRNRG) has biased composition (basic residues). Positions 170–398 (FLDLRVAVLG…LNILPPLTNS (229 aa)) constitute a tr-type G domain. Residues 179–186 (GNVDSGKS), 260–264 (DLAGH), and 316–319 (SKID) contribute to the GTP site.

This sequence belongs to the TRAFAC class translation factor GTPase superfamily. Classic translation factor GTPase family. GTPBP1 subfamily. Predominantly expressed in thymus, spleen, and testis. Expressed at lower levels in brain, lung, kidney, and ovary.

The protein is GTP-binding protein 2 of Homo sapiens (Human).